Reading from the N-terminus, the 470-residue chain is 4-O-methyltransferase 1 (470 aa).

S-adenosyl-L-methionine is bound by residues 274-275, D297, 328-329, and K344; these read GG and DC. The active-site Proton acceptor is H348.

Belongs to the class I-like SAM-binding methyltransferase superfamily. Cation-independent O-methyltransferase family. COMT subfamily.

In terms of biological role, S-adenosyl-L-methionine-dependent methyltransferase that preferentially catalyzes the methylation of 4-OH phenolic compounds like coniferyl alcohol, vanillyl alcohol and ferrulic acid. May play a role in promoting lignin degradation by methylating and inactivating free-hydroxyl phenolic compounds, products of lignin cleavage which are known inhibitors of lignin peroxidases. This chain is 4-O-methyltransferase 1, found in Phanerochaete chrysosporium (strain RP-78 / ATCC MYA-4764 / FGSC 9002) (White-rot fungus).